Consider the following 515-residue polypeptide: Bifunctional purine biosynthesis protein PurH (515 aa).

Positions 1–145 constitute an MGS-like domain; sequence MTKRALISVS…KNHASVTVVV (145 aa).

Belongs to the PurH family.

It catalyses the reaction (6R)-10-formyltetrahydrofolate + 5-amino-1-(5-phospho-beta-D-ribosyl)imidazole-4-carboxamide = 5-formamido-1-(5-phospho-D-ribosyl)imidazole-4-carboxamide + (6S)-5,6,7,8-tetrahydrofolate. The catalysed reaction is IMP + H2O = 5-formamido-1-(5-phospho-D-ribosyl)imidazole-4-carboxamide. It functions in the pathway purine metabolism; IMP biosynthesis via de novo pathway; 5-formamido-1-(5-phospho-D-ribosyl)imidazole-4-carboxamide from 5-amino-1-(5-phospho-D-ribosyl)imidazole-4-carboxamide (10-formyl THF route): step 1/1. The protein operates within purine metabolism; IMP biosynthesis via de novo pathway; IMP from 5-formamido-1-(5-phospho-D-ribosyl)imidazole-4-carboxamide: step 1/1. This Streptococcus pyogenes serotype M6 (strain ATCC BAA-946 / MGAS10394) protein is Bifunctional purine biosynthesis protein PurH.